Reading from the N-terminus, the 387-residue chain is MNFHEYQAKQLFAEYGIPVPAGRIASSADEAVTAAKSLGNGPWMVKAQIHAGGRGKAGGVKFCKTTDEVKQAAATMLGTKMATYQSAGVALPVNLVLVTEAGEITKELYLSVLVDRGTRSITYIASSEGGVDIEHVAAETPEKIQTLNVDFVEGLQPYQGRDIGFHLGLEAKQVNQLSKIMISLYQLFNDKDLSLIELNPLAILSNGDLYALDGKINSDDNATFRHKELAAMRDKTQEDETEVLASENDLNYVTMDGNIGCMVNGAGLAMATMDVIKLNGGEPANFLDVGGGATKERVTTAFKLILSSNKVKAIFVNIFGGIVRCDMIAEGIIAAVKEVGVKVPVIVRLEGTNVDAGKQLLATSGLAIIPADDINDGAKKAVAAVTV.

Residues 9–244 (KQLFAEYGIP…KTQEDETEVL (236 aa)) form the ATP-grasp domain. Residues Lys-46, 53-55 (GRG), Gly-102, and Glu-107 each bind ATP. Residues Asn-199 and Asp-213 each contribute to the Mg(2+) site. Substrate-binding positions include Asn-264 and 321–323 (GIV).

This sequence belongs to the succinate/malate CoA ligase beta subunit family. Heterotetramer of two alpha and two beta subunits. Mg(2+) is required as a cofactor.

It carries out the reaction succinate + ATP + CoA = succinyl-CoA + ADP + phosphate. It catalyses the reaction GTP + succinate + CoA = succinyl-CoA + GDP + phosphate. It participates in carbohydrate metabolism; tricarboxylic acid cycle; succinate from succinyl-CoA (ligase route): step 1/1. Succinyl-CoA synthetase functions in the citric acid cycle (TCA), coupling the hydrolysis of succinyl-CoA to the synthesis of either ATP or GTP and thus represents the only step of substrate-level phosphorylation in the TCA. The beta subunit provides nucleotide specificity of the enzyme and binds the substrate succinate, while the binding sites for coenzyme A and phosphate are found in the alpha subunit. The sequence is that of Succinate--CoA ligase [ADP-forming] subunit beta from Xylella fastidiosa (strain M23).